A 136-amino-acid chain; its full sequence is Acidic phospholipase A2 EC-I (136 aa).

Positions 1-16 (MKTLWIVAVWLIAVEG) are cleaved as a signal peptide. 7 disulfides stabilise this stretch: C42–C129, C44–C60, C59–C111, C65–C136, C66–C104, C73–C97, and C91–C102. Ca(2+) contacts are provided by Y43, G45, and G47. H63 is an active-site residue. D64 contacts Ca(2+). D105 is a catalytic residue. Residues 112–133 (LGENVNTYDKKYKSYEDCTEEV) form a may be responsible for inhibition of the platelet-aggregation activity region.

This sequence belongs to the phospholipase A2 family. Group II subfamily. D49 sub-subfamily. As to quaternary structure, monomer. It depends on Ca(2+) as a cofactor. In terms of tissue distribution, expressed by the venom gland.

Its subcellular location is the secreted. The catalysed reaction is a 1,2-diacyl-sn-glycero-3-phosphocholine + H2O = a 1-acyl-sn-glycero-3-phosphocholine + a fatty acid + H(+). Snake venom phospholipase A2 (PLA2) that inhibits human platelet aggregation induced by ADP, collagen and epinephrin (possibly by binding the platelet receptor alpha-IIb/beta-III) and induces mild edema in the foot pads of mice. PLA2 catalyzes the calcium-dependent hydrolysis of the 2-acyl groups in 3-sn-phosphoglycerides. In Echis carinatus (Saw-scaled viper), this protein is Acidic phospholipase A2 EC-I.